Here is a 496-residue protein sequence, read N- to C-terminus: MVISVEAADYTAFPCAALLVGCREDNPLEDSLLARIDQLLQGAIASLVQSREITGELNRVTILHTLGRLPAERIVLVGLGNSGALTSDRLRQVGGSAVKALKGAGVTRAASVVHRAAGVPPTSVADIAQGLSLGDYSFDIYKTKPGTTVPVTELVNLFEPGTDTADAERLLAADATICEAVSFARDLVSQPGNVATPLFLAEKALEFSARLGIACTVLDRDEMERQGMEGILSVAKGSHQLPRFIVLEYRGGSADKRPTVLVGKGITFDSGGISLKPREGMERMKDDMAGAAAVMGAVMAVAGLRLPVNVIGLIPAAENLPGGGAYKPGDIVRTMSGQTVEIVNTDAEGRMILSDALFYAQRFKPAAVIDLATLTGACLVALGSAVSGVMGNDAALVKLLRRAGEATGERLWELPLWDEYGEIMKSDVADLKNAGGPHAGTITAAWFLQRFVGKSRWAHVDIAGTAWEEKGRPYQPKGATGVGVRLLVEYLKATVR.

2 residues coordinate Mn(2+): K264 and D269. Residue K276 is part of the active site. The Mn(2+) site is built by D287, D346, and E348. The active site involves R350.

Belongs to the peptidase M17 family. The cofactor is Mn(2+).

Its subcellular location is the cytoplasm. The enzyme catalyses Release of an N-terminal amino acid, Xaa-|-Yaa-, in which Xaa is preferably Leu, but may be other amino acids including Pro although not Arg or Lys, and Yaa may be Pro. Amino acid amides and methyl esters are also readily hydrolyzed, but rates on arylamides are exceedingly low.. The catalysed reaction is Release of an N-terminal amino acid, preferentially leucine, but not glutamic or aspartic acids.. In terms of biological role, presumably involved in the processing and regular turnover of intracellular proteins. Catalyzes the removal of unsubstituted N-terminal amino acids from various peptides. This chain is Probable cytosol aminopeptidase, found in Geobacter sulfurreducens (strain ATCC 51573 / DSM 12127 / PCA).